The chain runs to 84 residues: ATP synthase subunit c (84 aa).

A run of 2 helical transmembrane segments spans residues 21 to 38 and 60 to 80; these read ALGA…IGKI and MIII…VCLL.

It belongs to the ATPase C chain family. F-type ATPases have 2 components, F(1) - the catalytic core - and F(0) - the membrane proton channel. F(1) has five subunits: alpha(3), beta(3), gamma(1), delta(1), epsilon(1). F(0) has three main subunits: a(1), b(2) and c(10-14). The alpha and beta chains form an alternating ring which encloses part of the gamma chain. F(1) is attached to F(0) by a central stalk formed by the gamma and epsilon chains, while a peripheral stalk is formed by the delta and b chains.

It localises to the cell inner membrane. In terms of biological role, f(1)F(0) ATP synthase produces ATP from ADP in the presence of a proton or sodium gradient. F-type ATPases consist of two structural domains, F(1) containing the extramembraneous catalytic core and F(0) containing the membrane proton channel, linked together by a central stalk and a peripheral stalk. During catalysis, ATP synthesis in the catalytic domain of F(1) is coupled via a rotary mechanism of the central stalk subunits to proton translocation. Functionally, key component of the F(0) channel; it plays a direct role in translocation across the membrane. A homomeric c-ring of between 10-14 subunits forms the central stalk rotor element with the F(1) delta and epsilon subunits. The protein is ATP synthase subunit c of Phocaeicola vulgatus (strain ATCC 8482 / DSM 1447 / JCM 5826 / CCUG 4940 / NBRC 14291 / NCTC 11154) (Bacteroides vulgatus).